The following is a 285-amino-acid chain: Pantothenate synthetase (285 aa).

30–37 (MGYLHEGH) contacts ATP. The active-site Proton donor is the H37. Q61 contacts (R)-pantoate. Q61 is a binding site for beta-alanine. Position 148–151 (148–151 (GKKD)) interacts with ATP. (R)-pantoate is bound at residue Q154. Residues I177 and 185-188 (LSSR) contribute to the ATP site.

It belongs to the pantothenate synthetase family. In terms of assembly, homodimer.

It localises to the cytoplasm. The enzyme catalyses (R)-pantoate + beta-alanine + ATP = (R)-pantothenate + AMP + diphosphate + H(+). The protein operates within cofactor biosynthesis; (R)-pantothenate biosynthesis; (R)-pantothenate from (R)-pantoate and beta-alanine: step 1/1. Its function is as follows. Catalyzes the condensation of pantoate with beta-alanine in an ATP-dependent reaction via a pantoyl-adenylate intermediate. This Leptospira borgpetersenii serovar Hardjo-bovis (strain JB197) protein is Pantothenate synthetase.